Consider the following 299-residue polypeptide: Probable lipid kinase YegS-like (299 aa).

Residues 1–129 (MSERKALLIL…IDLGEVGGQM (129 aa)) form the DAGKc domain. Residues threonine 39, 65–71 (GDGTLRD), and threonine 92 contribute to the ATP site. 3 residues coordinate Mg(2+): leucine 210, aspartate 213, and leucine 215. Glutamate 268 serves as the catalytic Proton acceptor.

It belongs to the diacylglycerol/lipid kinase family. YegS lipid kinase subfamily. Mg(2+) serves as cofactor. It depends on Ca(2+) as a cofactor.

Its subcellular location is the cytoplasm. Functionally, probably phosphorylates lipids; the in vivo substrate is unknown. This Pseudomonas fluorescens (strain ATCC BAA-477 / NRRL B-23932 / Pf-5) protein is Probable lipid kinase YegS-like.